Consider the following 441-residue polypeptide: MTGSLWLSLALSLAVLAQFKVSAAPNLVCFYDSQGSQRQGLAQFSMIDIELALQFCTHLVYGYAGVNADNYEMQSINKRLDLEQRHLAQITSMKERYPHIKFLLSVGGDADTNEGNQYIKLLESGQQGHRRFIESARDLVRRYNFDGLDLALQLPRNKPRKVHGDVGSAWKSFKKFFTGDFIVDTESETHKGQVTALIKDLSAALKQNDLLLSLTVLPNVNSSWYYDAPSIAPSLDFINLGTFDFLTPQRNPEEADFSAPTYEAVGQNRLGHYNLNFQMEHWLLQRVPANKINIGIATYGRSWKMSKDSGDSGMPVVPSTQGPAPAGPQSKQEGLLNWAEICSLMPNPSNSNARGPNAPVKRVVDPTKRYGSYAFRAADENGDHGLWISYDDPDSASSKAMYARARNLGGVALFDLTQDDFRGQCTNDRFPMLRAIKYRLL.

The first 23 residues, 1 to 23 (MTGSLWLSLALSLAVLAQFKVSA), serve as a signal peptide directing secretion. Residues 25-441 (PNLVCFYDSQ…MLRAIKYRLL (417 aa)) enclose the GH18 domain. Residues Cys-29 and Cys-56 are joined by a disulfide bond. Residue Asn-221 is glycosylated (N-linked (GlcNAc...) asparagine). Residues 307–331 (KDSGDSGMPVVPSTQGPAPAGPQSK) are disordered. A disulfide bridge links Cys-342 with Cys-425.

The protein belongs to the glycosyl hydrolase 18 family. IDGF subfamily. Post-translationally, glycosylated. Primarily expressed in yolk cells and fat body. In larvae, it is expressed in small and large salivary gland cells, and weakly expressed in imaginal disks. Less expressed than Idgf2 and Idgf4.

The protein resides in the secreted. Its function is as follows. Cooperates with insulin-like peptides to stimulate the proliferation, polarization and motility of imaginal disk cells. May act by stabilizing the binding of insulin-like peptides to its receptor through a simultaneous interaction with both molecules to form a multiprotein signaling complex. This is Chitinase-like protein Idgf3 (Idgf3) from Drosophila melanogaster (Fruit fly).